Here is a 299-residue protein sequence, read N- to C-terminus: MIPYATIEEASIALSRNLTWLETLWFDYSATKSDYYLYCHNILFLFLIFSLVPLPLVFIESSQSTSDLFNRYKIQPKVKNSFSSMFKCYKDVMKMFILVVGPLQLVSYPSIQMIEIRSGLPLPSCMEIVAQLVVYFLVEDYTNYWVHRFFHCKWGYEKFHHIHHEYTAPIGYAAPYAHWAEVLLLGIPTFLGPAIAPGHMITFWLWIALRQIEAIETHSGYDFPWSLTKYIPFYGGAEYHDYHHYVGGQSQSNFASVFTYCDYIYGTDKGYRFQKKLLQQMKEKSKKSNKLVNGGEKFD.

A run of 3 helical transmembrane segments spans residues 39–59 (CHNI…LVFI), 96–116 (FILV…MIEI), and 118–138 (SGLP…YFLV). The 136-residue stretch at 132–267 (LVVYFLVEDY…FTYCDYIYGT (136 aa)) folds into the Fatty acid hydroxylase domain. A Histidine box-1 motif is present at residues 147–151 (HRFFH). Positions 160 to 164 (HHIHH) match the Histidine box-2 motif. The helical transmembrane segment at 189–209 (TFLGPAIAPGHMITFWLWIAL) threads the bilayer. The Histidine box-3 signature appears at 239–245 (YHDYHHY).

Belongs to the sterol desaturase family. As to quaternary structure, interacts with ACBP1. Fe cation is required as a cofactor. Expressed in embryo sacs, pollen and trichomes. Observed in leaves, roots, siliques and flowers.

It localises to the endoplasmic reticulum membrane. The enzyme catalyses 4,4-dimethyl-5alpha-cholest-7-en-3beta-ol + 6 Fe(II)-[cytochrome b5] + 3 O2 + 5 H(+) = 4alpha-carboxy-4beta-methyl-5alpha-cholest-7-ene-3beta-ol + 6 Fe(III)-[cytochrome b5] + 4 H2O. It carries out the reaction 24-methylenecycloartanol + 6 Fe(II)-[cytochrome b5] + 3 O2 + 5 H(+) = 4alpha-carboxy-4beta,14alpha-dimethyl-9beta,19-cyclo-5alpha-ergost-24(24(1))-en-3beta-ol + 6 Fe(III)-[cytochrome b5] + 4 H2O. In terms of biological role, non-heme iron oxygenase involved in sterols biosynthesis by catalyzing the removal of the first methyl group at the C-4 position. 4,4-dimethyl-9-beta,19-cyclopropylsterols such as 24-methylenecycloartanol are the preferred substrates. Acts as a rate-limiting enzyme in the sterol pathway via interaction with ACBP1; sterols serve as lipid modulators for gene expression of homeodomain-leucine zipper IV transcription factors. Together with SMO1-1, involved in the maintenance of sterol composition to balance auxin and cytokinin activities during embryogenesis. This is Methylsterol monooxygenase 1-2 from Arabidopsis thaliana (Mouse-ear cress).